A 215-amino-acid polypeptide reads, in one-letter code: uncharacterized protein (215 aa).

The protein belongs to the HAD-like hydrolase superfamily. CbbY/CbbZ/Gph/YieH family.

This is an uncharacterized protein from Lacticaseibacillus casei (Lactobacillus casei).